We begin with the raw amino-acid sequence, 149 residues long: Large ribosomal subunit protein uL15 (149 aa).

Residues 1–61 form a disordered region; it reads MELNSLRPAL…GGQMPLQRRL (61 aa). Basic residues predominate over residues 30 to 39; the sequence is TATKGHKGQK.

It belongs to the universal ribosomal protein uL15 family. In terms of assembly, part of the 50S ribosomal subunit.

Binds to the 23S rRNA. The polypeptide is Large ribosomal subunit protein uL15 (Trichlorobacter lovleyi (strain ATCC BAA-1151 / DSM 17278 / SZ) (Geobacter lovleyi)).